Reading from the N-terminus, the 393-residue chain is MAQENAAFSPGSEEPPRRRGRQRYVEKDGRCNVQQGNVRETYRYLTDLFTTLVDLQWRLSLLFFVLAYALTWLFFGAIWWLIAYGRGDLEHLEDTAWTPCVNNLNGFVAAFLFSIETETTIGYGHRVITDQCPEGIVLLLLQAILGSMVNAFMVGCMFVKISQPNKRAATLVFSSHAVVSLRDGRLCLMFRVGDLRSSHIVEASIRAKLIRSRQTLEGEFIPLHQTDLSVGFDTGDDRLFLVSPLVISHEIDAASPFWEASRRALERDDFEIVVILEGMVEATGMTCQARSSYLVDEVLWGHRFTSVLTLEDGFYEVDYASFHETFEVPTPSCSARELAEAAARLDAHLYWSIPSRLDEKVEEEGAGEGAGAGDGADKEHNGCLPPPESESKV.

The interval 1–23 (MAQENAAFSPGSEEPPRRRGRQR) is disordered. Residues 1–57 (MAQENAAFSPGSEEPPRRRGRQRYVEKDGRCNVQQGNVRETYRYLTDLFTTLVDLQW) are Cytoplasmic-facing. A helical transmembrane segment spans residues 58–82 (RLSLLFFVLAYALTWLFFGAIWWLI). The Extracellular portion of the chain corresponds to 83 to 106 (AYGRGDLEHLEDTAWTPCVNNLNG). The helical; Pore-forming intramembrane region spans 107–118 (FVAAFLFSIETE). Residues 119–125 (TTIGYGH) constitute an intramembrane region (pore-forming). A Selectivity filter motif is present at residues 120–125 (TIGYGH). Residues 126–134 (RVITDQCPE) lie on the Extracellular side of the membrane. The chain crosses the membrane as a helical span at residues 135–156 (GIVLLLLQAILGSMVNAFMVGC). The Cytoplasmic segment spans residues 157-393 (MFVKISQPNK…LPPPESESKV (237 aa)). The disordered stretch occupies residues 360 to 393 (KVEEEGAGEGAGAGDGADKEHNGCLPPPESESKV). A compositionally biased stretch (pro residues) spans 384–393 (LPPPESESKV). Residues 390–393 (ESKV) carry the PDZ-binding motif.

The protein belongs to the inward rectifier-type potassium channel (TC 1.A.2.1) family. KCNJ9 subfamily. Associates with KCNJ3/GIRK1 to form a G-protein-activated heteromultimer pore-forming unit. Interacts (via PDZ-binding motif) with SNX27 (via PDZ domain); the interaction is required when endocytosed to prevent degradation in lysosomes and promote recycling to the plasma membrane. In terms of tissue distribution, expressed mainly in the brain, some expression in the skeletal muscle.

Its subcellular location is the membrane. It catalyses the reaction K(+)(in) = K(+)(out). In terms of biological role, inward rectifier potassium channels are characterized by a greater tendency to allow potassium to flow into the cell rather than out of it. Their voltage dependence is regulated by the concentration of extracellular potassium; as external potassium is raised, the voltage range of the channel opening shifts to more positive voltages. The inward rectification is mainly due to the blockage of outward current by internal magnesium. This receptor is controlled by G proteins. Unable to produce channel activity when expressed alone. Forms a functional channel in association with KCNJ3/GIRK1. The polypeptide is G protein-activated inward rectifier potassium channel 3 (Kcnj9) (Mus musculus (Mouse)).